A 550-amino-acid chain; its full sequence is Urocanate hydratase (550 aa).

Residues 48–49 (GG), Q126, 172–174 (GMG), E192, R197, 238–239 (NA), 259–263 (QTSAH), 268–269 (YL), and Y317 each bind NAD(+). C405 is an active-site residue. G487 lines the NAD(+) pocket.

Belongs to the urocanase family. It depends on NAD(+) as a cofactor.

It is found in the cytoplasm. It catalyses the reaction 4-imidazolone-5-propanoate = trans-urocanate + H2O. It participates in amino-acid degradation; L-histidine degradation into L-glutamate; N-formimidoyl-L-glutamate from L-histidine: step 2/3. Functionally, catalyzes the conversion of urocanate to 4-imidazolone-5-propionate. This Saccharopolyspora erythraea (strain ATCC 11635 / DSM 40517 / JCM 4748 / NBRC 13426 / NCIMB 8594 / NRRL 2338) protein is Urocanate hydratase.